A 425-amino-acid chain; its full sequence is cAMP/cGMP-dependent 3',5'-cAMP/cGMP phosphodiesterase 7 (425 aa).

Positions 1-17 are cleaved as a signal peptide; that stretch reads MKYLILILIFFIEINNG.

This sequence belongs to the cyclic nucleotide phosphodiesterase class-II family.

It localises to the secreted. The protein localises to the extracellular space. It is found in the cell surface. The enzyme catalyses 3',5'-cyclic AMP + H2O = AMP + H(+). The catalysed reaction is 3',5'-cyclic GMP + H2O = GMP + H(+). Its activity is regulated as follows. Inhibited by dithiotreitol (DTT). Its function is as follows. Phosphodiesterase with dual cAMP/cGMP specificity. However, displays a preference for cAMP over cGMP. Seems to regulate cAMP/cGMP concentration especially during cell aggregation. In Dictyostelium discoideum (Social amoeba), this protein is cAMP/cGMP-dependent 3',5'-cAMP/cGMP phosphodiesterase 7 (pde7).